The chain runs to 260 residues: Adenosylcobinamide-GDP ribazoletransferase (260 aa).

Transmembrane regions (helical) follow at residues 40 to 60 (AFPLAGAVLGLLAGAVLFMAY), 64 to 84 (LPPLACAMLAIGALAAMTGAL), 117 to 137 (FAALTLIVFVGLKAALLMTII), 192 to 212 (GIGLAFLVFTLIPAGGFLSLI), 214 to 234 (ALVLATGLLFGFARLCIAKIG), and 240 to 260 (TLGAAQQIGSVAVLAGLVMAL).

The protein belongs to the CobS family. Mg(2+) is required as a cofactor.

It localises to the cell inner membrane. The enzyme catalyses alpha-ribazole + adenosylcob(III)inamide-GDP = adenosylcob(III)alamin + GMP + H(+). It carries out the reaction alpha-ribazole 5'-phosphate + adenosylcob(III)inamide-GDP = adenosylcob(III)alamin 5'-phosphate + GMP + H(+). The protein operates within cofactor biosynthesis; adenosylcobalamin biosynthesis; adenosylcobalamin from cob(II)yrinate a,c-diamide: step 7/7. Its function is as follows. Joins adenosylcobinamide-GDP and alpha-ribazole to generate adenosylcobalamin (Ado-cobalamin). Also synthesizes adenosylcobalamin 5'-phosphate from adenosylcobinamide-GDP and alpha-ribazole 5'-phosphate. In Brucella anthropi (strain ATCC 49188 / DSM 6882 / CCUG 24695 / JCM 21032 / LMG 3331 / NBRC 15819 / NCTC 12168 / Alc 37) (Ochrobactrum anthropi), this protein is Adenosylcobinamide-GDP ribazoletransferase.